Here is a 339-residue protein sequence, read N- to C-terminus: Phenylalanine--tRNA ligase alpha subunit (339 aa).

E254 contributes to the Mg(2+) binding site.

The protein belongs to the class-II aminoacyl-tRNA synthetase family. Phe-tRNA synthetase alpha subunit type 1 subfamily. In terms of assembly, tetramer of two alpha and two beta subunits. Mg(2+) is required as a cofactor.

It localises to the cytoplasm. It catalyses the reaction tRNA(Phe) + L-phenylalanine + ATP = L-phenylalanyl-tRNA(Phe) + AMP + diphosphate + H(+). The polypeptide is Phenylalanine--tRNA ligase alpha subunit (Alkaliphilus oremlandii (strain OhILAs) (Clostridium oremlandii (strain OhILAs))).